We begin with the raw amino-acid sequence, 345 residues long: GDP-mannose transporter (345 aa).

The Cytoplasmic portion of the chain corresponds to 1-8 (MDNHMLNR). A helical membrane pass occupies residues 9–29 (ISKSPILPVVSYCMASILMTL). At 30–40 (TNKYVLSSPGY) the chain is on the lumenal side. A helical membrane pass occupies residues 41–61 (NMNFLLLTVQSTVCVAAIGIL). The Cytoplasmic segment spans residues 62–78 (KRLKVINYRDFDFREAK). Residues 79–101 (FWFPISFLLVAMIYTASKALQFL) traverse the membrane as a helical segment. Over 102-104 (SVP) the chain is Lumenal. A helical membrane pass occupies residues 105–127 (VYTIFKNLTIIIIAYGEVLWFGG). Residues 128 to 131 (HVTA) lie on the Cytoplasmic side of the membrane. The helical transmembrane segment at 132–150 (LTLFSFGLMVLSSIVAAWA) threads the bilayer. The Lumenal segment spans residues 151 to 161 (DIQSSSFASQT). The helical transmembrane segment at 162 to 182 (LNSGYLWMVLNCLTNAAFVLA) threads the bilayer. Over 183–194 (MRKRIKLTNFRD) the chain is Cytoplasmic. A helical membrane pass occupies residues 195–215 (FDTMFYNNLLSIPVLVICTLF). The Lumenal segment spans residues 216 to 233 (TEDWSAENIAQNFPPDAK). The chain crosses the membrane as a helical span at residues 234-254 (FGVLMAMAISGVSSVGISYTS). The Cytoplasmic segment spans residues 255–264 (AWCVRVTSST). Residues 265–285 (TYSMVGALNKLPLAIAGLVFF) form a helical membrane-spanning segment. The Lumenal portion of the chain corresponds to 286-288 (DAP). The helical transmembrane segment at 289 to 309 (ITFGSVTAILLGFISGVVYAV) threads the bilayer. The Cytoplasmic portion of the chain corresponds to 310 to 345 (AKSQQQRQKDPATILPMTHNPVSASSQSMRDSLSKS). Positions 319 to 345 (DPATILPMTHNPVSASSQSMRDSLSKS) are disordered. A compositionally biased stretch (polar residues) spans 329–345 (NPVSASSQSMRDSLSKS).

This sequence belongs to the TPT transporter family. SLC35D subfamily. Homooligomer.

Its subcellular location is the golgi apparatus membrane. It localises to the cytoplasmic vesicle membrane. The protein resides in the endoplasmic reticulum membrane. Its function is as follows. Involved in the import of GDP-mannose from the cytoplasm into the Golgi lumen. The protein is GDP-mannose transporter (vrg4) of Schizosaccharomyces pombe (strain 972 / ATCC 24843) (Fission yeast).